A 248-amino-acid chain; its full sequence is Ubiquinone/menaquinone biosynthesis C-methyltransferase UbiE (248 aa).

Residues serine 68 and aspartate 92 each contribute to the S-adenosyl-L-methionine site.

This sequence belongs to the class I-like SAM-binding methyltransferase superfamily. MenG/UbiE family.

It catalyses the reaction a 2-demethylmenaquinol + S-adenosyl-L-methionine = a menaquinol + S-adenosyl-L-homocysteine + H(+). The catalysed reaction is a 2-methoxy-6-(all-trans-polyprenyl)benzene-1,4-diol + S-adenosyl-L-methionine = a 5-methoxy-2-methyl-3-(all-trans-polyprenyl)benzene-1,4-diol + S-adenosyl-L-homocysteine + H(+). It functions in the pathway quinol/quinone metabolism; menaquinone biosynthesis; menaquinol from 1,4-dihydroxy-2-naphthoate: step 2/2. The protein operates within cofactor biosynthesis; ubiquinone biosynthesis. Its function is as follows. Methyltransferase required for the conversion of demethylmenaquinol (DMKH2) to menaquinol (MKH2) and the conversion of 2-polyprenyl-6-methoxy-1,4-benzoquinol (DDMQH2) to 2-polyprenyl-3-methyl-6-methoxy-1,4-benzoquinol (DMQH2). This chain is Ubiquinone/menaquinone biosynthesis C-methyltransferase UbiE, found in Rickettsia conorii (strain ATCC VR-613 / Malish 7).